Reading from the N-terminus, the 253-residue chain is Phycoerythrobilin:ferredoxin oxidoreductase (253 aa).

Belongs to the HY2 family.

It catalyses the reaction (3Z)-phycoerythrobilin + oxidized 2[4Fe-4S]-[ferredoxin] = 15,16-dihydrobiliverdin + reduced 2[4Fe-4S]-[ferredoxin] + 2 H(+). In terms of biological role, catalyzes the two-electron reduction of the C2 and C3(1) diene system of 15,16-dihydrobiliverdin. In Prochlorococcus marinus (strain MIT 9312), this protein is Phycoerythrobilin:ferredoxin oxidoreductase.